The following is a 242-amino-acid chain: Probable transcriptional regulatory protein NGK_1508 (242 aa).

The protein belongs to the TACO1 family.

It is found in the cytoplasm. The protein is Probable transcriptional regulatory protein NGK_1508 of Neisseria gonorrhoeae (strain NCCP11945).